Consider the following 806-residue polypeptide: MDSRIITPGPYRATKLWNEVTKHFRAAMPLRKHRQHFKAYGNCFTASEAIDWLHQLLKTNSNFGSEVTRQQTIQLLRKFLKNHVIEDLKGRWGTEELEDNNSLYRFPSTSPVKTIPSRPPLWKRSSLENVFKEKEHLFKMPQFSKKTPKRRASVDSKEEQENEDLMEDQRNDDDFPKQLSSKDIEDIWGNITMIHLQKILGLPSLEEVLNPAQIKPNYIRYNMTNTSKHGVVVLQDKTDDLPHWVLSAMKCLANWPKNNDMSQATYIGFERDVFRTVADYFLNLPEPLLTFEFYELFVNILVVCGYITVPNSHNGKHRFHNKTRDPAPAKKQHLNDEQFFKSTECLLLSLVRKVPNEEEDDVEHSFGEIARDNKDHIPRDVFAKKNHLYGSFSRRASRGTIGGSCQNLSTSRKETGVTRKVRVRSCSLEGIADSVSTDVRDCQSNILQPSSQKPEFSVVKERPITFGNQAESVTGLNASEHKLHYRTSDGGYSQTSEKLARSVSVGDCLESRTSKNAPVAEITIKPLKSKQTRMQKRFSPTDNEPTDLDFTVTKRLCQSTMELSHSSFPSTSSLLPPTTSPNSTGSESLLQPHLEKVAIEALQLCCLLLPPANRRKLQLLMRMISRMSQNVDMPRLHDAMGTRSLMIQTFSRCVLCCAEEVDLDELLASRLVSFLMDHHQDILQVPCYLQTAVQDHVQYLQRPRVKQGTVPEYYFCKQISAQEFEEQRLATSQAAIMELLENIVRDKALAVKDKKKKLKQFQKQYPDIYQSRFPTTESEAKLFGDKPTIKQPMLMLKKPKFKSLRY.

Positions 24–108 constitute a DEP domain; it reads FRAAMPLRKH…DNNSLYRFPS (85 aa). The segment at 142-177 is disordered; that stretch reads QFSKKTPKRRASVDSKEEQENEDLMEDQRNDDDFPK. The segment covering 167 to 177 has biased composition (basic and acidic residues); the sequence is EDQRNDDDFPK. Residues 279–319 form the Rho-GAP domain; the sequence is DYFLNLPEPLLTFEFYELFVNILVVCGYITVPNSHNGKHRF. Residues 564-588 are disordered; that stretch reads SHSSFPSTSSLLPPTTSPNSTGSES.

The protein is DEP domain-containing protein 1A (depdc1a) of Xenopus laevis (African clawed frog).